The chain runs to 256 residues: Phosphoribosylaminoimidazole-succinocarboxamide synthase (256 aa).

The protein belongs to the SAICAR synthetase family.

The enzyme catalyses 5-amino-1-(5-phospho-D-ribosyl)imidazole-4-carboxylate + L-aspartate + ATP = (2S)-2-[5-amino-1-(5-phospho-beta-D-ribosyl)imidazole-4-carboxamido]succinate + ADP + phosphate + 2 H(+). Its pathway is purine metabolism; IMP biosynthesis via de novo pathway; 5-amino-1-(5-phospho-D-ribosyl)imidazole-4-carboxamide from 5-amino-1-(5-phospho-D-ribosyl)imidazole-4-carboxylate: step 1/2. In Synechococcus sp. (strain JA-3-3Ab) (Cyanobacteria bacterium Yellowstone A-Prime), this protein is Phosphoribosylaminoimidazole-succinocarboxamide synthase.